We begin with the raw amino-acid sequence, 200 residues long: Adenylate kinase (200 aa).

ATP is bound at residue 10–15; that stretch reads GAGKGT. Positions 30 to 59 are NMP; sequence STGDMLRAAVAAGTPVGLEAKAVMESGGLV. AMP contacts are provided by residues Thr-31, Arg-36, 57-59, 85-88, and Gln-92; these read GLV and GFPR. The segment at 126–142 is LID; that stretch reads KRAAETLARGQAVRKDD. Arg-127 is a binding site for ATP. Residues Arg-139 and Arg-150 each coordinate AMP. Residue Gln-178 coordinates ATP.

Belongs to the adenylate kinase family. As to quaternary structure, monomer.

Its subcellular location is the cytoplasm. The catalysed reaction is AMP + ATP = 2 ADP. It functions in the pathway purine metabolism; AMP biosynthesis via salvage pathway; AMP from ADP: step 1/1. Catalyzes the reversible transfer of the terminal phosphate group between ATP and AMP. Plays an important role in cellular energy homeostasis and in adenine nucleotide metabolism. This is Adenylate kinase from Methylobacterium radiotolerans (strain ATCC 27329 / DSM 1819 / JCM 2831 / NBRC 15690 / NCIMB 10815 / 0-1).